The sequence spans 607 residues: Glucose-6-phosphate isomerase, glycosomal (607 aa).

Residue Glu-411 is the Proton donor of the active site. Active-site residues include His-442 and Lys-571. The Microbody targeting signal motif lies at 605–607 (SHL).

Belongs to the GPI family. In terms of assembly, homodimer.

It localises to the glycosome. The catalysed reaction is alpha-D-glucose 6-phosphate = beta-D-fructose 6-phosphate. Its pathway is carbohydrate degradation; glycolysis; D-glyceraldehyde 3-phosphate and glycerone phosphate from D-glucose: step 2/4. The protein is Glucose-6-phosphate isomerase, glycosomal (PGI) of Trypanosoma brucei brucei.